The following is a 341-amino-acid chain: HTH-type transcriptional repressor PurR (341 aa).

Residues 2–56 enclose the HTH lacI-type domain; that stretch reads ATIKDVAKRANVSTTTVSHVINKTRFVAEETRNAVWAAIKELHYSPSAVARSLKV. A DNA-binding region (H-T-H motif) is located at residues 4 to 23; sequence IKDVAKRANVSTTTVSHVIN. The DNA-binding element occupies 48-56; it reads SAVARSLKV. The hypoxanthine site is built by tyrosine 73, arginine 190, threonine 192, phenylalanine 221, and aspartate 275.

As to quaternary structure, homodimer.

Its pathway is purine metabolism; purine nucleotide biosynthesis [regulation]. Its function is as follows. Is the main repressor of the genes involved in the de novo synthesis of purine nucleotides, regulating purB, purC, purEK, purF, purHD, purL, purMN and guaBA expression. PurR is allosterically activated to bind its cognate DNA by binding the purine corepressors, hypoxanthine or guanine, thereby effecting transcription repression. The sequence is that of HTH-type transcriptional repressor PurR from Escherichia coli (strain UTI89 / UPEC).